A 104-amino-acid chain; its full sequence is Large ribosomal subunit protein bL21 (104 aa).

It belongs to the bacterial ribosomal protein bL21 family. In terms of assembly, part of the 50S ribosomal subunit. Contacts protein L20.

This protein binds to 23S rRNA in the presence of protein L20. This is Large ribosomal subunit protein bL21 from Lactococcus lactis subsp. lactis (strain IL1403) (Streptococcus lactis).